Reading from the N-terminus, the 145-residue chain is Large-conductance mechanosensitive channel (145 aa).

2 helical membrane passes run 14–34 (VIDLAIGIIIGGAFGKIVDSL) and 81–101 (GIFISTIVDFLIMAFVVFLMV).

The protein belongs to the MscL family. As to quaternary structure, homopentamer.

The protein localises to the cell inner membrane. In terms of biological role, channel that opens in response to stretch forces in the membrane lipid bilayer. May participate in the regulation of osmotic pressure changes within the cell. The protein is Large-conductance mechanosensitive channel of Pelobacter propionicus (strain DSM 2379 / NBRC 103807 / OttBd1).